The sequence spans 101 residues: Small ribosomal subunit protein uS14 (101 aa).

The protein belongs to the universal ribosomal protein uS14 family. As to quaternary structure, part of the 30S ribosomal subunit. Contacts proteins S3 and S10.

Binds 16S rRNA, required for the assembly of 30S particles and may also be responsible for determining the conformation of the 16S rRNA at the A site. This chain is Small ribosomal subunit protein uS14, found in Bartonella henselae (strain ATCC 49882 / DSM 28221 / CCUG 30454 / Houston 1) (Rochalimaea henselae).